Here is a 452-residue protein sequence, read N- to C-terminus: MTYVFPETIAAQATPSGRGGIGVVRVSGEKTKAIAQKILGCVPKPRYATFVKFRDSGSVIDEGIALYFPKPNSFTGEDVLELHGHGGPVVMDRLLNTVLKAGARQARPGEFSERAFLNNKIDLAQAEAVADLINASSEQAARSAMRSLQGEFSKRIHQLVDALIQLRMYIEASIDFPEEEIDFLADERIKETLENLTHQVQEIEKTAKQGALLREGITVVIAGEPNVGKSSLLNLLSGQETAIVTDIAGTTRDIIRESIHIDGLPIHVVDTAGLRLTEDVVEKEGVRRTQKAVQQADLLLLMIDASKPTEDFKKIIAQWFSENDNKIPTLIVENKIDLIGEAPRKENKEYPHIKLSVKTRAGVELLKNHLKNTAGFEATHENNFIARRRHCDAIARASAFLKNANNHLLNQKAGELVAEDLKLAQNALSEITGEFTSDDLLGKIFSEFCIGK.

(6S)-5-formyl-5,6,7,8-tetrahydrofolate-binding residues include Arg25, Glu81, and Lys120. Residues Gly216–Gly375 form the TrmE-type G domain. Asn226 serves as a coordination point for K(+). Residues Asn226–Ser231, Thr245–Thr251, and Asp270–Gly273 contribute to the GTP site. Residue Ser230 participates in Mg(2+) binding. Positions 245, 247, and 250 each coordinate K(+). Thr251 is a Mg(2+) binding site. Lys452 contacts (6S)-5-formyl-5,6,7,8-tetrahydrofolate.

The protein belongs to the TRAFAC class TrmE-Era-EngA-EngB-Septin-like GTPase superfamily. TrmE GTPase family. Homodimer. Heterotetramer of two MnmE and two MnmG subunits. K(+) serves as cofactor.

It is found in the cytoplasm. Exhibits a very high intrinsic GTPase hydrolysis rate. Involved in the addition of a carboxymethylaminomethyl (cmnm) group at the wobble position (U34) of certain tRNAs, forming tRNA-cmnm(5)s(2)U34. This chain is tRNA modification GTPase MnmE, found in Coxiella burnetii (strain Dugway 5J108-111).